Consider the following 90-residue polypeptide: Probable Fe(2+)-trafficking protein (90 aa).

This sequence belongs to the Fe(2+)-trafficking protein family. As to quaternary structure, monomer.

Functionally, could be a mediator in iron transactions between iron acquisition and iron-requiring processes, such as synthesis and/or repair of Fe-S clusters in biosynthetic enzymes. This Pectobacterium atrosepticum (strain SCRI 1043 / ATCC BAA-672) (Erwinia carotovora subsp. atroseptica) protein is Probable Fe(2+)-trafficking protein.